Reading from the N-terminus, the 956-residue chain is MTLLLVSLLLASLLQISSGNKANKHKPWIEAEYQGIVMENDNTVLLNPPLFALDKDAPLRYAGEICGFRLHGSGVPFEAVILDKATGEGLIRAKEPVDCEAQKEHTFTIQAYDCGEGPDGTNTKKSHKATVHVRVNDVNEFAPVFVERLYRAAVTEGKLYDRILRVEAIDGDCSPQYSQICYYEILTPNTPFLIDNDGNIENTEKLQYSGEKLYKFTVTAYDCGKKRAADDAEVEIQVKPTCKPSWQGWNKRIEYAPGAGSLALFPGIRLETCDEPLWNIQATIELQTSHVAKGCDRDNYSERALRKLCGAATGEVDLLPMPGPNANWTAGLSVHYSQDSSLIYWFNGTQAVQVPLGGPAGLGSGPQDGFSDHFTLSFWMKHSVTPSKGKKEEETIVCNTVQNEDGYSHYSLTVHGCRIAFLYWPLLESARPVKFLWKLEQVCDDEWHHYALNLEFPTVTLYTDGISFDPALIHDNGLIHPPRREPALMIGACWTEEKNKEKKGGENSTDTASGDPLLIHHYFHGYLAGFSVRSGRLESREVIECLYACREGLDYRDFESLGKGMKVHVNPSQSLLTLEGDDVETFNHALQHVAYMNTLRFATPGVRPLRLTTAVKCFSEESCVSIPEVEGYVVVLQPDAPQILLSGTAHFARPAVDFEGPEGVPLFPDLQITCSISHQVEAKADESWQGTVTDTRMSDEIVHNLDGCEISLVGDDLDPERESLLLDMASLQQRGLELTNTSAYLTIAGVETITVYEEILRQARYQLRHGAALYARKFRLSCSEMNGRYSSNEFIVEVNVLHSMNRVAHPSHVLSSQQFLHRGHQPPPEMAGHSLASSHRNSMVPSAATLIIVVCVGFLVLMVILGLVRIHSLHRRVSGTGGPSGASTDPKDPDLFWDDSALTIIVNPMESYQNQQTCVAGVAGGQQEEEDSSDSEAADSPSSDERRIIESPPHRY.

A signal peptide spans 1–19; the sequence is MTLLLVSLLLASLLQISSG. At 1-21 the chain is on the cytoplasmic side; sequence MTLLLVSLLLASLLQISSGNK. At 20–847 the chain is on the extracellular side; sequence NKANKHKPWI…SHRNSMVPSA (828 aa). Residues 22 to 42 constitute an intramembrane region (helical); it reads ANKHKPWIEAEYQGIVMENDN. 2 consecutive Cadherin domains span residues 29–145 and 146–246; these read IEAE…APVF and VERL…KPSW. The Cytoplasmic portion of the chain corresponds to 43–73; it reads TVLLNPPLFALDKDAPLRYAGEICGFRLHGS. The segment at residues 74–94 is an intramembrane region (helical); the sequence is GVPFEAVILDKATGEGLIRAK. Topologically, residues 95-139 are cytoplasmic; it reads EPVDCEAQKEHTFTIQAYDCGEGPDGTNTKKSHKATVHVRVNDVN. The segment at residues 140–160 is an intramembrane region (helical); it reads EFAPVFVERLYRAAVTEGKLY. Residues 161-248 are Cytoplasmic-facing; that stretch reads DRILRVEAID…KPTCKPSWQG (88 aa). The chain crosses the membrane as a helical span at residues 249–269; it reads WNKRIEYAPGAGSLALFPGIR. The Lumenal segment spans residues 270–357; the sequence is LETCDEPLWN…GTQAVQVPLG (88 aa). Residues N299, N327, N347, N507, and N740 are each glycosylated (N-linked (GlcNAc...) asparagine). The helical transmembrane segment at 848-868 threads the bilayer; the sequence is ATLIIVVCVGFLVLMVILGLV. Residues 869–956 lie on the Cytoplasmic side of the membrane; it reads RIHSLHRRVS…RIIESPPHRY (88 aa). The interval 916–956 is disordered; it reads QTCVAGVAGGQQEEEDSSDSEAADSPSSDERRIIESPPHRY. The segment covering 927-937 has biased composition (acidic residues); it reads QEEEDSSDSEA. A compositionally biased stretch (basic and acidic residues) spans 943-956; that stretch reads SDERRIIESPPHRY.

Belongs to the calsyntenin family. In terms of assembly, interacts (via cadherin domains) with both alpha and beta isoforms of neurexins (NRXN1, NRXN2 and NRXN3). Directly interacts with APBA2. Forms a tripartite complex with APBA2 and APP. Interacts with low affinity with KLC1. Interacts with SLC23A2/SVCT2. As to quaternary structure, interacts with CIDEA; inhibiting the lipid transferase activity of CIDEA. Interacts with CIDEC; inhibiting the lipid transferase activity of CIDEC. In terms of processing, proteolytically processed under normal cellular conditions. A primary zeta-cleavage generates a large extracellular (soluble) N-terminal domain (sAlc) and a short C-terminal transmembrane fragment (CTF1). A secondary cleavage catalyzed by gamma-secretase within the transmembrane domain releases the beta-Alc-beta chain in the extracellular milieu and produces an intracellular fragment (AlcICD). This processing is strongly suppressed in the tripartite complex formed with APBA2 and APP, which seems to prevent the association with gamma-secretase. Post-translationally, ubiquitinated: endoplasmic reticulum-localized protein is ubiquitinated and degraded by the endoplasmic reticulum-associated degradation (ERAD) pathway. In terms of tissue distribution, restricted to the brain (at protein level). In the cerebral cortex, found in the somas and neuropil of all layers. Expressed at highest levels in neurons of cortical layer 5 and, at lower levels, in neurons of the upper layers. Highly expressed in Purkinje cells. Also found in a few scattered interneurons throughout the granule cell layer and occasionally in neurons in the molecular layer (at protein level). In all layers, high levels in a subpopulation of presumptive GABAergic neurons (based on morphology). Expression is restricted to adipose tissue, with high expression in thermogenic adipocytes (brown adipose tissue).

It localises to the postsynaptic cell membrane. The protein localises to the endoplasmic reticulum membrane. Its subcellular location is the golgi apparatus membrane. It is found in the cell projection. The protein resides in the dendrite. It localises to the lipid droplet. Its function is as follows. Postsynaptic adhesion molecule that binds to presynaptic neurexins to mediate both excitatory and inhibitory synapse formation. Promotes synapse development by acting as a cell adhesion molecule at the postsynaptic membrane, which associates with both neurexin-alpha and neurexin-beta proteins at the presynaptic membrane. Regulates the balance between excitatory and inhibitory synapses by inhibiting formation of excitatory parallel-fiber synapses and promoting formation of inhibitory synapses in the same neuron. May also be involved in ascorbate (vitamin C) uptake via its interaction with SLC23A2/SVCT2. Complex formation with APBA2 and APP, stabilizes APP metabolism and enhances APBA2-mediated suppression of beta-APP40 secretion, due to the retardation of intracellular APP maturation. In terms of biological role, adipose-specific isoform that plays a key role in adaptive thermogenesis. Facilitates the efficient use of stored triglyceride by promoting multilocular morphology of thermogenic adipocytes: acts by inhibiting the activity of CIDEA and CIDEC on lipid droplets, thereby preventing lipid droplet fusion and facilitating lipid utilization. May also participate in adaptive thermogenesis by promoting sympathetic innervation of thermogenic adipose tissue: acts by driving secretion of neurotrophic factor S100B from brown adipocytes, stimulating neurite outgrowth from sympathetic neurons. This Mus musculus (Mouse) protein is Calsyntenin-3.